Consider the following 352-residue polypeptide: Protein RecA (352 aa).

64 to 71 (GPESSGKT) provides a ligand contact to ATP. The tract at residues 328-352 (NPSSVPEAEAEHDPEQDEEPTFDLE) is disordered. Acidic residues predominate over residues 335–352 (AEAEHDPEQDEEPTFDLE).

This sequence belongs to the RecA family.

The protein resides in the cytoplasm. Can catalyze the hydrolysis of ATP in the presence of single-stranded DNA, the ATP-dependent uptake of single-stranded DNA by duplex DNA, and the ATP-dependent hybridization of homologous single-stranded DNAs. It interacts with LexA causing its activation and leading to its autocatalytic cleavage. This chain is Protein RecA, found in Brevibacillus brevis (strain 47 / JCM 6285 / NBRC 100599).